Here is a 252-residue protein sequence, read N- to C-terminus: Imidazole glycerol phosphate synthase subunit HisF (252 aa).

Active-site residues include Asp-11 and Asp-130.

It belongs to the HisA/HisF family. In terms of assembly, heterodimer of HisH and HisF.

It is found in the cytoplasm. It catalyses the reaction 5-[(5-phospho-1-deoxy-D-ribulos-1-ylimino)methylamino]-1-(5-phospho-beta-D-ribosyl)imidazole-4-carboxamide + L-glutamine = D-erythro-1-(imidazol-4-yl)glycerol 3-phosphate + 5-amino-1-(5-phospho-beta-D-ribosyl)imidazole-4-carboxamide + L-glutamate + H(+). Its pathway is amino-acid biosynthesis; L-histidine biosynthesis; L-histidine from 5-phospho-alpha-D-ribose 1-diphosphate: step 5/9. Functionally, IGPS catalyzes the conversion of PRFAR and glutamine to IGP, AICAR and glutamate. The HisF subunit catalyzes the cyclization activity that produces IGP and AICAR from PRFAR using the ammonia provided by the HisH subunit. This is Imidazole glycerol phosphate synthase subunit HisF from Bacillus velezensis (strain DSM 23117 / BGSC 10A6 / LMG 26770 / FZB42) (Bacillus amyloliquefaciens subsp. plantarum).